A 338-amino-acid chain; its full sequence is Glycerol-3-phosphate dehydrogenase [NAD(P)+] (338 aa).

NADPH contacts are provided by Ser13, Trp14, and Lys108. Sn-glycerol 3-phosphate-binding residues include Lys108, Gly139, and Ser141. Residue Ala143 participates in NADPH binding. Positions 194, 247, 257, 258, and 259 each coordinate sn-glycerol 3-phosphate. The active-site Proton acceptor is the Lys194. Residue Arg258 participates in NADPH binding. NADPH-binding residues include Val282 and Glu284.

The protein belongs to the NAD-dependent glycerol-3-phosphate dehydrogenase family.

The protein localises to the cytoplasm. The enzyme catalyses sn-glycerol 3-phosphate + NAD(+) = dihydroxyacetone phosphate + NADH + H(+). It catalyses the reaction sn-glycerol 3-phosphate + NADP(+) = dihydroxyacetone phosphate + NADPH + H(+). The protein operates within membrane lipid metabolism; glycerophospholipid metabolism. Catalyzes the reduction of the glycolytic intermediate dihydroxyacetone phosphate (DHAP) to sn-glycerol 3-phosphate (G3P), the key precursor for phospholipid synthesis. This Listeria monocytogenes serotype 4a (strain HCC23) protein is Glycerol-3-phosphate dehydrogenase [NAD(P)+].